The chain runs to 159 residues: H/ACA ribonucleoprotein complex subunit 2-like protein (159 aa).

The interval 1-28 is disordered; that stretch reads MAKTPKKDKTEEKEEHEESGGNKEDRER.

The protein belongs to the eukaryotic ribosomal protein eL8 family. In terms of assembly, component of the small nucleolar ribonucleoprotein particle containing H/ACA-type snoRNAs (H/ACA snoRNPs). Component of the telomerase holoenzyme complex.

The protein localises to the nucleus. Its subcellular location is the nucleolus. Its function is as follows. Required for ribosome biogenesis. Part of a complex which catalyzes pseudouridylation of rRNA. This involves the isomerization of uridine such that the ribose is subsequently attached to C5, instead of the normal N1. Pseudouridine ('psi') residues may serve to stabilize the conformation of rRNAs. The polypeptide is H/ACA ribonucleoprotein complex subunit 2-like protein (Branchiostoma belcheri (Amphioxus)).